The sequence spans 545 residues: MAAKEVKFSTDARDRMLKGVNILADAVKVTLGPKGRNVVIEKSFGAPRITKDGVSVAKEIELADKFENMGAQMVKEVASRTNDEAGDGTTTATVLAQAIVREGMKAVAAGMNPMDLKRGIDLATTTVVEAIKAAARPVKDSDEVAQVGTISANGEAQIGRFIADASQKVGNEGVITVEENKGMDTEVEVVEGMQFDRGYLSPYFVTNPDKMIADLEDAYILLHEKKLSSLQPMVPLLEAVIQSTRPLIIVAEDVEGEALATLVVNKLRGGLKIAAVKAPGFGDRRKAMLQDIAILTGGQVISDDLGMKLENVTLDMLGRAKKVTISKENTTIVDGHGDKAEINARVAHIRTQIEETTSDYDREKLQERVAKLAGGVAVIRVGGMTEVEVKERKDRVDDALNATRAAVQEGIIVGGGVALVQAAKKLNDLTGANSDQDAGISIVRRALEAPLRQIAENAGVDGAVVAGKVRESADPAFGFNAQTEEYGDMFGFGVIDPAKVTRTALEDAASIAGLLITTECMIAEKPEPKAAPAGGMGGMGGMDMM.

ATP-binding positions include 30-33 (TLGP), lysine 51, 87-91 (DGTTT), glycine 415, and aspartate 496.

The protein belongs to the chaperonin (HSP60) family. As to quaternary structure, forms a cylinder of 14 subunits composed of two heptameric rings stacked back-to-back. Interacts with the co-chaperonin GroES.

The protein localises to the cytoplasm. The catalysed reaction is ATP + H2O + a folded polypeptide = ADP + phosphate + an unfolded polypeptide.. Its function is as follows. Together with its co-chaperonin GroES, plays an essential role in assisting protein folding. The GroEL-GroES system forms a nano-cage that allows encapsulation of the non-native substrate proteins and provides a physical environment optimized to promote and accelerate protein folding. The chain is Chaperonin GroEL from Rhodobacter capsulatus (Rhodopseudomonas capsulata).